The sequence spans 347 residues: MRIEEDLKLGFKDVLIRPKRSTLKSRSDVELERQFTFKHSGQTWSGVPIIAANMDTVGTFEMASALASFDILTAVHKHYSVEDWNAFTSTASEDVLRHVMVSTGTSDADFEKTKQILAQSPALNFVCIDVANGYSEHFVQFVSKAREAWPTKTICAGNVVTGEMCEELVLSGADIVKVGIGPGSVCTTRVKTGVGYPQLSAVIECADAAHGLGGMIVSDGGCTMPGDVAKAFGGGADFVMLGGMLAGHEESGGKIVEENGEKFMLFYGMSSESAMTRHVGGVAQYRAAEGKTVKLPLRGPVEYTARDILGGLRSACTYVGASRLKELTKRTTFIRVQEQENRVFNSL.

108-131 (ADFEKTKQILAQSPALNFVCIDVA) lines the NADP(+) pocket. 2 residues coordinate K(+): Gly181 and Gly183. Cys186 serves as the catalytic Thioimidate intermediate. An NADP(+)-binding site is contributed by 216–239 (IVSDGGCTMPGDVAKAFGGGADFV).

The protein belongs to the IMPDH/GMPR family. GuaC type 1 subfamily. Homotetramer.

It carries out the reaction IMP + NH4(+) + NADP(+) = GMP + NADPH + 2 H(+). In terms of biological role, catalyzes the irreversible NADPH-dependent deamination of GMP to IMP. It functions in the conversion of nucleobase, nucleoside and nucleotide derivatives of G to A nucleotides, and in maintaining the intracellular balance of A and G nucleotides. The protein is GMP reductase of Citrobacter koseri (strain ATCC BAA-895 / CDC 4225-83 / SGSC4696).